Reading from the N-terminus, the 1219-residue chain is Cullin-associated NEDD8-dissociated protein 1 (1219 aa).

Residue A2 is modified to N-acetylalanine. HEAT repeat units follow at residues 44 to 81 (DLEVRLSSIILQQLDDVAGDVSGLAVKCLAPLVKKVGE), 83 to 119 (RIVEMTNKLCDKLLHGKDQHRDTASIALRTVVAQIAP), 209 to 244 (KATVEVVKNLSNRNAKSEITRTNIQMIGALCRAVGY), 248 to 288 (THLG…RCPR), 327 to 363 (EEDDESANEYTDDEDASWKVRRAAAKCLAGLIVSRSE), 367 to 404 (KVYQEACPKLIDRFKEREENVKMDVFNTFIDLLRQTGN), 423 to 460 (QEVSKIVKSINRQLREKSVKTKVGAFSVLRELVVVLPD), 464 to 503 (DHIGSLVPGIERALNDKSSTSNLKIEALVFTKLVLASHAP), 599 to 636 (AELPSCLPVLVDRMGNEITRLTAVKAFSVIATSPLHIN), 639 to 676 (CVLDHLIAELTGFLRKANRVLRQATLITMNTLVTAYGD), 808 to 848 (KNCS…RKDL), 850 to 883 (AHAGIETIVIESFQSPFEEIKSAASYALGNIAVG), 927 to 964 (SSVEKILALLFNHCESEEEGVRNVVAECLGKMALIEPE), 966 to 998 (LVPALQVRTTSPAAFTRATVVTAVKYSVVERPE), 1002 to 1039 (EIIFPQISSFLMLIKDGDRHVRRAAVSALSTFAHYKPN), 1043 to 1079 (GLLPELLPLLYDQTVIKKELIRTVDLGPFKHVVDDGL), 1101 to 1137 (NPSSFIVPFLKSGLEDHYDLKMLCHLILSLLADKCPS), and 1141 to 1180 (AVLDSLVEPLHKTISFKPKQDAVKQEHDRNEDMIRSALRA). Positions 311-340 (FTDNMEEDTDNETLEDEEDDESANEYTDDE) are disordered. Over residues 314-340 (NMEEDTDNETLEDEEDDESANEYTDDE) the composition is skewed to acidic residues.

This sequence belongs to the CAND family. Interacts with CUL1 and CUL4. Binds unneddylated CUL1, but cannot bind CUL1 once it has been neddylated. In terms of tissue distribution, highly expressed in roots. Expressed in stems, flowers and siliques.

In terms of biological role, key assembly factor of SCF (SKP1-CUL1-F-box protein) E3 ubiquitin ligase complexes that promotes the exchange of the substrate-recognition F-box subunit in SCF complexes, thereby playing a key role in the cellular repertoire of SCF complexes. Acts as a F-box protein exchange factor. Required for SCF(TIR1) function. Modulates SCF(TIR1) function through its interactions with the CUL1 subunit. Represses photomorphogenesis by promoting HY5 degradation in darkness. This chain is Cullin-associated NEDD8-dissociated protein 1 (CAND1), found in Arabidopsis thaliana (Mouse-ear cress).